The chain runs to 107 residues: Replication initiation control protein YabA (107 aa).

Zn(2+) is bound by residues histidine 81, cysteine 83, cysteine 97, and cysteine 100.

This sequence belongs to the YabA family. As to quaternary structure, homotetramer. Interacts with both DnaA and DnaN, acting as a bridge between these two proteins. Zn(2+) serves as cofactor.

It localises to the cytoplasm. The protein resides in the nucleoid. Its function is as follows. Involved in control of chromosome replication initiation. Inhibits the cooperative binding of DnaA to the oriC region, thus negatively regulating initiation of chromosome replication. Inhibits the ability of DnaA-ATP to form a helix on DNA; does not disassemble preformed DnaA-DNA helices. Decreases the residence time of DnaA on the chromosome at its binding sites (oriC, replication forks and promoter-binding sites). Tethers DnaA to the replication machinery via the DNA polymerase beta sliding clamp subunit (dnaN). Associates with oriC and other DnaA targets on the chromosome in a DnaA-dependent manner. The polypeptide is Replication initiation control protein YabA (Streptococcus pyogenes serotype M3 (strain ATCC BAA-595 / MGAS315)).